The sequence spans 352 residues: Ni-sirohydrochlorin a,c-diamide reductive cyclase complex, component CfbD (352 aa).

Belongs to the NifD/NifK/NifE/NifN family. Homodimer or monomer. The Ni-sirohydrochlorin a,c-diamide reductive cyclase complex is composed of a NifH homolog component CfbC and a NifD homolog component CfbD. It depends on [4Fe-4S] cluster as a cofactor.

The enzyme catalyses Ni-sirohydrochlorin a,c-diamide + 3 AH2 + ATP + H2O = 15,17(3)-seco-F430-17(3)-acid + 3 A + ADP + phosphate. Functionally, involved in the biosynthesis of the unique nickel-containing tetrapyrrole coenzyme F430, the prosthetic group of methyl-coenzyme M reductase (MCR), which plays a key role in methanogenesis and anaerobic methane oxidation. Catalyzes both the six-electron reduction of the tetrahydroporphyrin ring system and the gamma-lactamization of the c-acetamide side chain of Ni-sirohydrochlorin a,c-diamide to yield 15,17(3)-seco-F430-17(3)-acid (seco-F430), the last intermediate in the biosynthesis of the coenzyme F430. The polypeptide is Ni-sirohydrochlorin a,c-diamide reductive cyclase complex, component CfbD (Methanocaldococcus jannaschii (strain ATCC 43067 / DSM 2661 / JAL-1 / JCM 10045 / NBRC 100440) (Methanococcus jannaschii)).